We begin with the raw amino-acid sequence, 237 residues long: MRPSNRTPAQTRPITITRQFTAHAEGSVLVEFGETKVLCTASFTEGVPRFLKGQGQGWVTAEYGMLPRSTHSRMDREAARGKQSGRTQEIQRLIGRALRACVDMKALGENTIVIDCDVIQADGGTRTASITGACVALVDALNWARGKGIIKSNPLKFLIAAVSVGIYNGEAISDLEYVEDSAAETDMNVVMTETGKIIEIQGTAEGEPFTHEELIELLGLAKNSIREIVDVQKAALN.

Phosphate contacts are provided by residues Arg86 and 124 to 126 (GTR).

Belongs to the RNase PH family. As to quaternary structure, homohexameric ring arranged as a trimer of dimers.

The catalysed reaction is tRNA(n+1) + phosphate = tRNA(n) + a ribonucleoside 5'-diphosphate. Functionally, phosphorolytic 3'-5' exoribonuclease that plays an important role in tRNA 3'-end maturation. Removes nucleotide residues following the 3'-CCA terminus of tRNAs; can also add nucleotides to the ends of RNA molecules by using nucleoside diphosphates as substrates, but this may not be physiologically important. Probably plays a role in initiation of 16S rRNA degradation (leading to ribosome degradation) during starvation. The chain is Ribonuclease PH from Shewanella oneidensis (strain ATCC 700550 / JCM 31522 / CIP 106686 / LMG 19005 / NCIMB 14063 / MR-1).